A 1432-amino-acid polypeptide reads, in one-letter code: Probable ATP-dependent RNA helicase spindle-E (1432 aa).

One can recognise a Helicase ATP-binding domain in the interval L124 to V291. G137 to T144 contacts ATP. Positions D237 to H240 match the DEAH box motif. A Helicase C-terminal domain is found at K337–E524. A Tudor domain is found at A936–Q999.

Belongs to the DEAD box helicase family. DEAH subfamily.

The protein localises to the cytoplasm. It carries out the reaction ATP + H2O = ADP + phosphate + H(+). Probable ATP-binding RNA helicase which plays a central role during spermatogenesis and oogenesis by repressing transposable elements and preventing their mobilization, which is essential for the germline integrity. Acts via the piRNA metabolic process, which mediates the repression of transposable elements during meiosis by forming complexes composed of piRNAs and Piwi and govern the methylation and subsequent repression of transposons. Involved in the repression of LTR retrotransposon copia. Also involved in telomere regulation by repressing specialized telomeric retroelements HeT-A, TAHRE, and TART; Drosophila telomeres being maintained by transposition of specialized telomeric retroelements. Involved in telomeric trans-silencing, a repression mechanism by which a transposon or a transgene inserted in subtelomeric heterochromatin has the capacity to repress in trans in the female germline, a homologous transposon, or transgene located in euchromatin. Involved in the repression of testis-expressed Stellate genes by the homologous Su(Ste) repeats. Required for anteroposterior and dorsoventral axis formation during oogenesis. The polypeptide is Probable ATP-dependent RNA helicase spindle-E (spn-E) (Drosophila erecta (Fruit fly)).